Reading from the N-terminus, the 355-residue chain is tRNA N6-adenosine threonylcarbamoyltransferase (355 aa).

Residues histidine 111 and histidine 115 each contribute to the Fe cation site. Residues 134–138 (LVSGG), aspartate 167, glycine 180, aspartate 184, and asparagine 279 contribute to the substrate site. Aspartate 307 serves as a coordination point for Fe cation.

This sequence belongs to the KAE1 / TsaD family. It depends on Fe(2+) as a cofactor.

The protein localises to the cytoplasm. The catalysed reaction is L-threonylcarbamoyladenylate + adenosine(37) in tRNA = N(6)-L-threonylcarbamoyladenosine(37) in tRNA + AMP + H(+). Required for the formation of a threonylcarbamoyl group on adenosine at position 37 (t(6)A37) in tRNAs that read codons beginning with adenine. Is involved in the transfer of the threonylcarbamoyl moiety of threonylcarbamoyl-AMP (TC-AMP) to the N6 group of A37, together with TsaE and TsaB. TsaD likely plays a direct catalytic role in this reaction. This chain is tRNA N6-adenosine threonylcarbamoyltransferase, found in Picosynechococcus sp. (strain ATCC 27264 / PCC 7002 / PR-6) (Agmenellum quadruplicatum).